A 130-amino-acid polypeptide reads, in one-letter code: Small ribosomal subunit protein uS9 (130 aa).

The protein belongs to the universal ribosomal protein uS9 family.

The sequence is that of Small ribosomal subunit protein uS9 from Pectobacterium carotovorum subsp. carotovorum (strain PC1).